The primary structure comprises 345 residues: Viral Fc-gamma receptor-like protein UL119 (345 aa).

The N-terminal stretch at 1–23 (MCSVLAIALVVALLGDMHPGVKS) is a signal peptide. A disordered region spans residues 23-43 (SSTTSAVTSPSNTTVTSTTSI). Over 24-293 (STTSAVTSPS…IKSDPLFEDR (270 aa)) the chain is Virion surface. N-linked (GlcNAc...) asparagine; by host glycans are attached at residues asparagine 34, asparagine 48, asparagine 95, asparagine 104, asparagine 148, asparagine 179, asparagine 198, asparagine 217, asparagine 225, asparagine 241, asparagine 244, and asparagine 260. The 100-residue stretch at 91-190 (QVSLNATCKV…TWDLFTYPIY (100 aa)) folds into the Ig-like V-type domain. The chain crosses the membrane as a helical span at residues 294–314 (LLAYGVLAFLVFMVIILLYVT). Residues 315-345 (YMLARRRDWSYKRLEEPVEEKKHPVPYFKQW) lie on the Intravirion side of the membrane.

The protein localises to the virion membrane. Functionally, serves as a receptor for the Fc part of human IgG. May thus be involved in interfering with host Ig-mediated immune responses. The protein is Viral Fc-gamma receptor-like protein UL119 (UL119/UL118) of Homo sapiens (Human).